A 239-amino-acid chain; its full sequence is MLTRKQQELLLFIHERMKESGVPPSFDEMKDALDLASKSGIHRLITALEERGFIRRLPNRARALEVIKLPEAYSPSLQPRRGFSPSVIEGSLGKPPAVAAPAAAKPIADNGNSVSVPVMGRIAAGVPISAIQNNTHDIVVPADMLGSGEHYALEVKGDSMIDAGIFDGDTVIIRNGSTASPGDIVVALVDDEEATLKRFRRKGASIALEAANPAYETRIFGPDRVKVQGKLVGLIRRYH.

Residues 26–46 (FDEMKDALDLASKSGIHRLIT) constitute a DNA-binding region (H-T-H motif). Residues Ser-159 and Lys-197 each act as for autocatalytic cleavage activity in the active site.

This sequence belongs to the peptidase S24 family. Homodimer.

The catalysed reaction is Hydrolysis of Ala-|-Gly bond in repressor LexA.. In terms of biological role, represses a number of genes involved in the response to DNA damage (SOS response), including recA and lexA. In the presence of single-stranded DNA, RecA interacts with LexA causing an autocatalytic cleavage which disrupts the DNA-binding part of LexA, leading to derepression of the SOS regulon and eventually DNA repair. The sequence is that of LexA repressor from Rhizobium etli (strain CIAT 652).